We begin with the raw amino-acid sequence, 833 residues long: G-type lectin S-receptor-like serine/threonine-protein kinase RKS1 (833 aa).

The first 18 residues, 1–18, serve as a signal peptide directing secretion; it reads MKVVFVIFFFFLFQFCIS. Residues 19 to 144 form the Bulb-type lectin domain; that stretch reads VDTIMRRQSL…VTGRSFWESF (126 aa). Topologically, residues 19-440 are extracellular; sequence VDTIMRRQSL…NGLSGKRRVL (422 aa). 6 N-linked (GlcNAc...) asparagine glycosylation sites follow: Asn-79, Asn-92, Asn-100, Asn-109, Asn-228, and Asn-256. The region spanning 280-330 is the EGF-like domain; sequence PKEQCDNYAHCGPNGYCDSPSSKTFECTCLPGFEPKFPRHWFLRDSSGGCT. 3 disulfide bridges follow: Cys-284-Cys-296, Cys-290-Cys-306, and Cys-308-Cys-329. One can recognise a PAN domain in the interval 338–421; sequence CSEKDGFVKL…SGQDFYIRVD (84 aa). Residues Asn-363 and Asn-376 are each glycosylated (N-linked (GlcNAc...) asparagine). 2 disulfides stabilise this stretch: Cys-369/Cys-396 and Cys-373/Cys-379. A helical transmembrane segment spans residues 441-461; it reads LILISLIAAVMLLTVILFCVV. At 462-833 the chain is on the cytoplasmic side; the sequence is RERRKSNRHR…DVTFSDIQGR (372 aa). The Protein kinase domain maps to 515 to 800; it reads FSSQNKLGAG…NLPNPKHPAF (286 aa). ATP-binding positions include 521-529 and Lys-543; that span reads LGAGGFGPV. Residues Ser-549 and Ser-564 each carry the phosphoserine modification. Residues 604–621 are caM-binding; it reads EQRAELDWPKRMEIVRGI. Asp-640 (proton acceptor) is an active-site residue. A phosphoserine mark is found at Ser-644 and Ser-657. A Phosphothreonine modification is found at Thr-674. Residues Ser-717 and Ser-821 each carry the phosphoserine modification.

Belongs to the protein kinase superfamily. Ser/Thr protein kinase family.

It localises to the cell membrane. It catalyses the reaction L-seryl-[protein] + ATP = O-phospho-L-seryl-[protein] + ADP + H(+). The enzyme catalyses L-threonyl-[protein] + ATP = O-phospho-L-threonyl-[protein] + ADP + H(+). The chain is G-type lectin S-receptor-like serine/threonine-protein kinase RKS1 (RKS1) from Arabidopsis thaliana (Mouse-ear cress).